Reading from the N-terminus, the 907-residue chain is Translation initiation factor IF-2 (907 aa).

Residues 26-317 (DAGMKKSSSD…KPKSMQHGFD (292 aa)) are disordered. Basic and acidic residues-rich tracts occupy residues 28–44 (GMKK…EKQK) and 101–248 (SAIE…DTDY). Positions 299–308 (KGGRKGKLSK) are enriched in basic residues. The region spanning 406 to 575 (PRAPVVTIMG…LLQAEVLELT (170 aa)) is the tr-type G domain. A G1 region spans residues 415-422 (GHVDHGKT). Residue 415–422 (GHVDHGKT) participates in GTP binding. The interval 440–444 (GITQH) is G2. Residues 461 to 464 (DTPG) are G3. Residues 461–465 (DTPGH) and 515–518 (NKID) each bind GTP. The interval 515 to 518 (NKID) is G4. Positions 551–553 (SAK) are G5.

It belongs to the TRAFAC class translation factor GTPase superfamily. Classic translation factor GTPase family. IF-2 subfamily.

It localises to the cytoplasm. Functionally, one of the essential components for the initiation of protein synthesis. Protects formylmethionyl-tRNA from spontaneous hydrolysis and promotes its binding to the 30S ribosomal subunits. Also involved in the hydrolysis of GTP during the formation of the 70S ribosomal complex. This is Translation initiation factor IF-2 from Vibrio vulnificus (strain CMCP6).